Consider the following 228-residue polypeptide: uncharacterized protein (228 aa).

This is an uncharacterized protein from Ictalurid herpesvirus 1 (strain Auburn) (IcHV-1).